The chain runs to 94 residues: Small ribosomal subunit protein uS19 (94 aa).

Belongs to the universal ribosomal protein uS19 family.

Protein S19 forms a complex with S13 that binds strongly to the 16S ribosomal RNA. This chain is Small ribosomal subunit protein uS19, found in Moorella thermoacetica (strain ATCC 39073 / JCM 9320).